An 873-amino-acid chain; its full sequence is Kinase suppressor of Ras 1 (873 aa).

Disordered stretches follow at residues 1–24 (MDRA…GAAA), 174–230 (EHKM…PGLS), and 251–281 (LHSF…PSRK). Residues 1–170 (MDRAALRAAA…ALTCLRKVTG (170 aa)) form a mediates association with membranes region. Polar residues predominate over residues 206–216 (ASTQGPRSISV). A phosphothreonine mark is found at Thr-256 and Thr-260. Ser-297 is subject to Phosphoserine; by MARK3. A Phosphoserine modification is found at Ser-320. The segment at 333-377 (THRFSTKSWLSQVCNVCQKSMIFGVKCKHCRLKCHNKCTKEAPAC) adopts a Phorbol-ester/DAG-type zinc-finger fold. His-334 is a binding site for Zn(2+). Ser-337 carries the post-translational modification Phosphoserine. Zn(2+)-binding residues include Cys-346, Cys-349, Cys-359, Cys-362, His-367, Cys-370, and Cys-377. Ser-392 carries the post-translational modification Phosphoserine; by MARK3. Thr-411 bears the Phosphothreonine mark. 2 disordered regions span residues 416 to 473 (LTKK…RFSF) and 506 to 544 (HEAE…PISR). A compositionally biased stretch (low complexity) spans 429–458 (SSSNPSSTTSSTPSSPAPFLTSSNPSSATT). Basic and acidic residues predominate over residues 506 to 519 (HEAEAEEPEAGKSE). At Ser-518 the chain carries Phosphoserine. A compositionally biased stretch (acidic residues) spans 520-530 (AEDDEEDEVDD). The region spanning 563–833 (VELGEPIGQG…MDMLERLPKL (271 aa)) is the Protein kinase domain. 569-577 (IGQGRWGRV) serves as a coordination point for ATP. Asp-683 serves as the catalytic Proton acceptor. Lys-685 and Asp-700 together coordinate ATP. Ser-838 carries the post-translational modification Phosphoserine.

This sequence belongs to the protein kinase superfamily. TKL Ser/Thr protein kinase family. As to quaternary structure, homodimer. Heterodimerizes (via N-terminus) with BRAF (via N-terminus) in a MAP2K1/MEK1 or MAP2K2/MEK2-dependent manner. Interacts with MAP2K1/MEK1 and MAP2K2/MEK2. Binding to MAP2K1/MEK1 releases the intramolecular inhibitory interaction between KSR1 N-terminus and kinase domains which is required for the subsequent RSK1 dimerization with BRAF. Identified in a complex with AKAP13, MAP2K1 and BRAF. Interacts with AKAP13 and BRAF. Interacts with RAF and MAPK/ERK, in a Ras-dependent manner. Interacts with 14-3-3 proteins including YWHAB. Interacts with HSP90AA1/HSP90, YWHAE/14-3-3 and CDC37. The binding of 14-3-3 proteins to phosphorylated KSR1 prevents the membrane localization. Interacts with MARK3/C-TAK1. Interacts with PPP2R1A and PPP2CA. Interacts with VRK2. In terms of processing, phosphorylated on Ser-297 and, to a higher extent, on Ser-392 by MARK3. Dephosphorylated on Ser-392 by PPP2CA. Phosphorylated KSR1 is cytoplasmic and dephosphorylated KSR1 is membrane-associated. Phosphorylated by PKA at Ser-838. Phosphorylation at Ser-838 is required for cAMP-dependent activation of MAPK1 and/or MAPK3. As to expression, expressed in brain, spleen and testis. Isoform 1 is highly expressed spleen and weakly in testis, and isoform 2 is highly expressed in brain and weakly in testis.

It localises to the cytoplasm. The protein localises to the membrane. It is found in the cell membrane. Its subcellular location is the cell projection. The protein resides in the ruffle membrane. It localises to the endoplasmic reticulum membrane. It catalyses the reaction L-seryl-[protein] + ATP = O-phospho-L-seryl-[protein] + ADP + H(+). The catalysed reaction is L-threonyl-[protein] + ATP = O-phospho-L-threonyl-[protein] + ADP + H(+). Its function is as follows. Part of a multiprotein signaling complex which promotes phosphorylation of Raf family members and activation of downstream MAP kinases. Independently of its kinase activity, acts as MAP2K1/MEK1 and MAP2K2/MEK2-dependent allosteric activator of BRAF; upon binding to MAP2K1/MEK1 or MAP2K2/MEK2, dimerizes with BRAF and promotes BRAF-mediated phosphorylation of MAP2K1/MEK1 and/or MAP2K2/MEK2. Promotes activation of MAPK1 and/or MAPK3, both in response to EGF and to cAMP. Its kinase activity is unsure. Some protein kinase activity has been detected in vitro, however the physiological relevance of this activity is unknown. The protein is Kinase suppressor of Ras 1 (Ksr1) of Mus musculus (Mouse).